Reading from the N-terminus, the 520-residue chain is Gamma aminobutyrate transaminase 3, chloroplastic (520 aa).

The N-terminal 44 residues, 1–44 (MAKITSLIGSGIVAATNQVGPHVKHIPAVGNLQKQIVSDQIQVR), are a transit peptide targeting the chloroplast. Residue 172-173 (GS) coordinates pyridoxal 5'-phosphate. Y205 provides a ligand contact to substrate. Pyridoxal 5'-phosphate is bound at residue D312. A substrate-binding site is contributed by K341. K341 carries the post-translational modification N6-(pyridoxal phosphate)lysine.

It belongs to the class-III pyridoxal-phosphate-dependent aminotransferase family. As to expression, expressed in leaves, roots, stems, flowers and fruits.

It is found in the plastid. Its subcellular location is the chloroplast. The enzyme catalyses 4-aminobutanoate + pyruvate = succinate semialdehyde + L-alanine. It catalyses the reaction 4-aminobutanoate + glyoxylate = succinate semialdehyde + glycine. Functionally, transaminase that degrades gamma-amino butyric acid (GABA) and uses pyruvate or glyoxylate as amino-group acceptor. Cannot use beta-alanine, ornithine, acetylornithine, serine, glycine, asparagine, glutamine, glutamate, valine, leucine, isoleucine, methionine, phenylalanine, histidine, lysine, arginine, aspartate, threonine, tyrosine, tryptophan, proline, or cysteine as amino donors. The protein is Gamma aminobutyrate transaminase 3, chloroplastic (GABA-TP3) of Solanum lycopersicum (Tomato).